Here is a 65-residue protein sequence, read N- to C-terminus: Large ribosomal subunit protein bL32 (65 aa).

The span at 1-19 (MAVQKSRKTPSKRGMRRSH) shows a compositional bias: basic residues. A disordered region spans residues 1–32 (MAVQKSRKTPSKRGMRRSHNALVKSTLSEDQE).

This sequence belongs to the bacterial ribosomal protein bL32 family.

The polypeptide is Large ribosomal subunit protein bL32 (Vesicomyosocius okutanii subsp. Calyptogena okutanii (strain HA)).